The following is a 244-amino-acid chain: 1-(5-phosphoribosyl)-5-[(5-phosphoribosylamino)methylideneamino] imidazole-4-carboxamide isomerase (244 aa).

The Proton acceptor role is filled by D8. D129 acts as the Proton donor in catalysis.

The protein belongs to the HisA/HisF family.

Its subcellular location is the cytoplasm. It carries out the reaction 1-(5-phospho-beta-D-ribosyl)-5-[(5-phospho-beta-D-ribosylamino)methylideneamino]imidazole-4-carboxamide = 5-[(5-phospho-1-deoxy-D-ribulos-1-ylimino)methylamino]-1-(5-phospho-beta-D-ribosyl)imidazole-4-carboxamide. It participates in amino-acid biosynthesis; L-histidine biosynthesis; L-histidine from 5-phospho-alpha-D-ribose 1-diphosphate: step 4/9. The protein is 1-(5-phosphoribosyl)-5-[(5-phosphoribosylamino)methylideneamino] imidazole-4-carboxamide isomerase of Geobacter sulfurreducens (strain ATCC 51573 / DSM 12127 / PCA).